A 567-amino-acid polypeptide reads, in one-letter code: Urease subunit alpha (567 aa).

A Urease domain is found at 129 to 567 (GGIDSHIHFI…LPMAQRYFLF (439 aa)). The Ni(2+) site is built by H134, H136, and K217. At K217 the chain carries N6-carboxylysine. Residue H219 participates in substrate binding. Ni(2+) contacts are provided by H246 and H272. The Proton donor role is filled by H320. D360 contacts Ni(2+).

This sequence belongs to the metallo-dependent hydrolases superfamily. Urease alpha subunit family. Heterotrimer of UreA (gamma), UreB (beta) and UreC (alpha) subunits. Three heterotrimers associate to form the active enzyme. Ni cation serves as cofactor. Carboxylation allows a single lysine to coordinate two nickel ions.

The protein resides in the cytoplasm. It catalyses the reaction urea + 2 H2O + H(+) = hydrogencarbonate + 2 NH4(+). It functions in the pathway nitrogen metabolism; urea degradation; CO(2) and NH(3) from urea (urease route): step 1/1. The chain is Urease subunit alpha from Tolumonas auensis (strain DSM 9187 / NBRC 110442 / TA 4).